A 340-amino-acid polypeptide reads, in one-letter code: Phosphoribosylformylglycinamidine cyclo-ligase (340 aa).

It belongs to the AIR synthase family.

It is found in the cytoplasm. The enzyme catalyses 2-formamido-N(1)-(5-O-phospho-beta-D-ribosyl)acetamidine + ATP = 5-amino-1-(5-phospho-beta-D-ribosyl)imidazole + ADP + phosphate + H(+). Its pathway is purine metabolism; IMP biosynthesis via de novo pathway; 5-amino-1-(5-phospho-D-ribosyl)imidazole from N(2)-formyl-N(1)-(5-phospho-D-ribosyl)glycinamide: step 2/2. The polypeptide is Phosphoribosylformylglycinamidine cyclo-ligase (Lactococcus lactis subsp. cremoris (strain MG1363)).